Reading from the N-terminus, the 470-residue chain is Argininosuccinate synthase (470 aa).

ATP contacts are provided by residues A17–S25 and A43. Residue Y99 participates in L-citrulline binding. Residues G129 and T131 each coordinate ATP. L-aspartate contacts are provided by T131, N135, and D136. Position 135 (N135) interacts with L-citrulline. Residue D136 participates in ATP binding. L-citrulline-binding residues include R139 and S192. D194 is an ATP binding site. L-citrulline is bound by residues T201, E203, and E280. The interval I448–D470 is disordered.

It belongs to the argininosuccinate synthase family. Type 2 subfamily. In terms of assembly, homotetramer.

The protein localises to the cytoplasm. The enzyme catalyses L-citrulline + L-aspartate + ATP = 2-(N(omega)-L-arginino)succinate + AMP + diphosphate + H(+). The protein operates within amino-acid biosynthesis; L-arginine biosynthesis; L-arginine from L-ornithine and carbamoyl phosphate: step 2/3. This Kineococcus radiotolerans (strain ATCC BAA-149 / DSM 14245 / SRS30216) protein is Argininosuccinate synthase.